Here is a 282-residue protein sequence, read N- to C-terminus: Probable endonuclease 4 (282 aa).

Zn(2+) is bound by residues His-69, His-109, Glu-145, Asp-179, His-182, His-216, Asp-229, His-231, and Glu-261.

Belongs to the AP endonuclease 2 family. It depends on Zn(2+) as a cofactor.

It carries out the reaction Endonucleolytic cleavage to 5'-phosphooligonucleotide end-products.. Its function is as follows. Endonuclease IV plays a role in DNA repair. It cleaves phosphodiester bonds at apurinic or apyrimidinic (AP) sites, generating a 3'-hydroxyl group and a 5'-terminal sugar phosphate. In Edwardsiella ictaluri (strain 93-146), this protein is Probable endonuclease 4.